The primary structure comprises 449 residues: Lysine-sensitive aspartokinase 3 (449 aa).

Positions 2–245 are aspartokinase; it reads SEIVVSKFGG…AAKRIDEIAF (244 aa). Residue 8-11 coordinates ATP; it reads KFGG. Residues T45, E119, and 198 to 201 each bind substrate; that span reads RGGS. ATP-binding positions include 221-222, Y227, R232, and 257-258; these read TD and KV. The segment at 246–449 is interface; that stretch reads AEAAEMATFG…VQKLHSNLFE (204 aa). The tract at residues 299–449 is required for homodimerization; that stretch reads FRALALRRNQ…VQKLHSNLFE (151 aa). The region spanning 313 to 394 is the ACT domain; it reads LHSLNMLHSR…GLALVALIGN (82 aa). L-lysine contacts are provided by residues M318, S321, 324-325, 338-340, and 345-346; these read FL, SVD, and SE.

This sequence belongs to the aspartokinase family. In terms of assembly, homodimer. In the inactive form a homotetramer is formed.

The enzyme catalyses L-aspartate + ATP = 4-phospho-L-aspartate + ADP. It functions in the pathway amino-acid biosynthesis; L-lysine biosynthesis via DAP pathway; (S)-tetrahydrodipicolinate from L-aspartate: step 1/4. Synthesis and activity are sensitive to the allosteric inhibitor lysine, one of the end metabolites of the aspartic acid family branched pathway. This chain is Lysine-sensitive aspartokinase 3 (lysC), found in Escherichia coli (strain K12).